A 512-amino-acid chain; its full sequence is Cytochrome P450 76C1 (512 aa).

A helical membrane pass occupies residues 3–23; it reads IISGQALLLLFCFILSCFLIF. C450 contacts heme.

The protein belongs to the cytochrome P450 family. Requires heme as cofactor.

It localises to the membrane. The sequence is that of Cytochrome P450 76C1 (CYP76C1) from Arabidopsis thaliana (Mouse-ear cress).